A 563-amino-acid polypeptide reads, in one-letter code: Arginine--tRNA ligase (563 aa).

The 'HIGH' region signature appears at 121 to 131 (PNIAKPFSIGH).

The protein belongs to the class-I aminoacyl-tRNA synthetase family. Monomer.

The protein resides in the cytoplasm. The enzyme catalyses tRNA(Arg) + L-arginine + ATP = L-arginyl-tRNA(Arg) + AMP + diphosphate. This chain is Arginine--tRNA ligase, found in Streptococcus thermophilus (strain CNRZ 1066).